The primary structure comprises 461 residues: MKKLWGGRFQKTPEKWVDEFGASISFDQNLVAEDITGSLAHAAMLKKCGILTAEEELKIREGLNTLLQKAEEGALEFSVDYEDIHLNIEKMLIDEIGPLGGKLHTGRSRNDQVATDMHLYLKNHVGHIIELIEAFQSALIEKAEANVETILPGYTHLQRAQPISFAHHLLAYFWMLERDKERFQDSMKRINKSPLGCGALAGTTFPIDRDYSAELLGFDAIYENSLDGVSDRDFILEFLSNSSMLMMHLSRFSEEIILWCSQEFKFIELDDTYATGSSMMPQKKNPDMAELIRGKTGRVYGDMMGLFTIMKGLPLAYNKDLQEDKEGMFDTVKTVEGSLQIFTGMIQTMTVNKDVMKQATKQDFSNATELADYLAKKGMPFREAHEVVGKLVYTCIERGIYLSDMPFGEFQQASTLFEEDIYTVLDPYYAVEKRMSAGGTGFKQVEQALEKAKACVAAGVC.

The protein belongs to the lyase 1 family. Argininosuccinate lyase subfamily.

The protein resides in the cytoplasm. The enzyme catalyses 2-(N(omega)-L-arginino)succinate = fumarate + L-arginine. It functions in the pathway amino-acid biosynthesis; L-arginine biosynthesis; L-arginine from L-ornithine and carbamoyl phosphate: step 3/3. The sequence is that of Argininosuccinate lyase from Bacillus subtilis (strain 168).